Here is a 284-residue protein sequence, read N- to C-terminus: Gap junction beta-1 protein (284 aa).

Topologically, residues 1-22 (MNWTGLYTLLSGVNRHSTAIGR) are cytoplasmic. Residues 23-45 (VWLSVIFIFRIMVLVVAAESVWG) form a helical membrane-spanning segment. Over 46-75 (DEKSSFICNTLQPGCNSVCYDHFFPISHVR) the chain is Extracellular. A helical transmembrane segment spans residues 76–95 (LWSLQLILVSTPALLVAMHV). The Cytoplasmic portion of the chain corresponds to 96 to 130 (AHQQHIEKKMLRLEGHGDPLHLEEVKRHKVHISGT). A helical membrane pass occupies residues 131–153 (LWWTYVISVVFRLLFEAAFMYVF). The Extracellular segment spans residues 154–191 (YLLYPGYAMVRLVKCDAYPCPNTVDCFVSRPTEKTIFT). The chain crosses the membrane as a helical span at residues 192 to 214 (VFMLAASGICIILNVAEVVYLIF). Residues 215-284 (RACARRAQRR…AEKSDRCSAC (70 aa)) lie on the Cytoplasmic side of the membrane. Phosphoserine is present on residues Ser233, Ser259, Ser267, and Ser278.

The protein belongs to the connexin family. Beta-type (group I) subfamily. As to quaternary structure, a connexon is composed of a hexamer of connexins. Interacts with CNST.

The protein resides in the cell membrane. It localises to the cell junction. It is found in the gap junction. Its function is as follows. One gap junction consists of a cluster of closely packed pairs of transmembrane channels, the connexons, through which materials of low MW diffuse from one cell to a neighboring cell. This is Gap junction beta-1 protein (GJB1) from Bos taurus (Bovine).